The sequence spans 299 residues: MAVLFLLLLFLCGLPQAETDSIQAIYVVLGEALELPCPSPPALNGDEFLSWFHSPAAGSSTALVAHVQVARPSRDPGKPRRESRLTLLGNYSLWLEGSKAGDAGRYWCALLGQRYRYQNWRVYDVSVLRGSQFSARAADGSSCSVLLCSVVPARSLDSVTWQEGKGPVKGDVQSFWGDGATLLLMCPGEGLPEPRAHKPGIIRCLVPQNKGISFSLAASTDASPALCAPSADWDVAWILTLLLTVGQGFTIVVLGVMLWRQRAQGAQHRNASFPQFKPEIQVYENIHLAHLSPPAPKTR.

The first 19 residues, 1–19 (MAVLFLLLLFLCGLPQAET), serve as a signal peptide directing secretion. Positions 20 to 124 (DSIQAIYVVL…YRYQNWRVYD (105 aa)) constitute an Ig-like V-type domain. The Extracellular segment spans residues 20 to 237 (DSIQAIYVVL…APSADWDVAW (218 aa)). The cysteines at positions 37 and 108 are disulfide-linked. Asn-90 carries N-linked (GlcNAc...) asparagine glycosylation. A helical membrane pass occupies residues 238-258 (ILTLLLTVGQGFTIVVLGVML). Residues 259 to 299 (WRQRAQGAQHRNASFPQFKPEIQVYENIHLAHLSPPAPKTR) are Cytoplasmic-facing. Tyr-283 is modified (phosphotyrosine).

As to quaternary structure, homodimer; disulfide-linked. Interacts with GRB2 and GRB7 in a phosphorylation-dependent manner. N-glycosylated.

It localises to the cell membrane. In terms of biological role, may play a role in the downstream signal transduction pathways involving GRB2 and GRB7. The sequence is that of Lymphocyte antigen 6 complex locus protein G6f (LY6G6F) from Bos taurus (Bovine).